The chain runs to 191 residues: UPF0312 protein PSPA7_0523 (191 aa).

The signal sequence occupies residues 1-23; sequence MLKKTLAALALGSALFTAGQAMA.

This sequence belongs to the UPF0312 family. Type 1 subfamily.

The protein localises to the periplasm. This is UPF0312 protein PSPA7_0523 from Pseudomonas paraeruginosa (strain DSM 24068 / PA7) (Pseudomonas aeruginosa (strain PA7)).